The chain runs to 237 residues: UDP-2,3-diacylglucosamine hydrolase (237 aa).

Mn(2+) contacts are provided by Asp-9, His-11, Asp-42, Asn-80, and His-115. Residue 80–81 coordinates substrate; it reads NR. Residues Asp-123, Ser-161, Lys-165, Lys-168, and His-196 each contribute to the substrate site. His-196 and His-198 together coordinate Mn(2+).

The protein belongs to the LpxH family. Requires Mn(2+) as cofactor.

The protein localises to the cell inner membrane. The enzyme catalyses UDP-2-N,3-O-bis[(3R)-3-hydroxytetradecanoyl]-alpha-D-glucosamine + H2O = 2-N,3-O-bis[(3R)-3-hydroxytetradecanoyl]-alpha-D-glucosaminyl 1-phosphate + UMP + 2 H(+). It functions in the pathway glycolipid biosynthesis; lipid IV(A) biosynthesis; lipid IV(A) from (3R)-3-hydroxytetradecanoyl-[acyl-carrier-protein] and UDP-N-acetyl-alpha-D-glucosamine: step 4/6. In terms of biological role, hydrolyzes the pyrophosphate bond of UDP-2,3-diacylglucosamine to yield 2,3-diacylglucosamine 1-phosphate (lipid X) and UMP by catalyzing the attack of water at the alpha-P atom. Involved in the biosynthesis of lipid A, a phosphorylated glycolipid that anchors the lipopolysaccharide to the outer membrane of the cell. This Haemophilus influenzae (strain PittGG) protein is UDP-2,3-diacylglucosamine hydrolase.